We begin with the raw amino-acid sequence, 94 residues long: U27-theraphotoxin-Cg1a (94 aa).

Residues 1–22 form the signal peptide; it reads MIFLLPPVIFVMLLAESVLILG. Residues 23–58 constitute a propeptide that is removed on maturation; the sequence is DSEDADLMEMVQMSRPFFNPIIPAVEFVDLREERQR. Disulfide bonds link Cys60-Cys78, Cys67-Cys83, and Cys77-Cys88.

This sequence belongs to the neurotoxin 14 (magi-1) family. OAIP-1 subfamily. In terms of tissue distribution, expressed by the venom gland.

The protein resides in the secreted. Probable ion channel inhibitor. This chain is U27-theraphotoxin-Cg1a, found in Chilobrachys guangxiensis (Chinese earth tiger tarantula).